Here is a 142-residue protein sequence, read N- to C-terminus: ATP synthase epsilon chain (142 aa).

Belongs to the ATPase epsilon chain family. F-type ATPases have 2 components, CF(1) - the catalytic core - and CF(0) - the membrane proton channel. CF(1) has five subunits: alpha(3), beta(3), gamma(1), delta(1), epsilon(1). CF(0) has three main subunits: a, b and c.

The protein resides in the cell inner membrane. Functionally, produces ATP from ADP in the presence of a proton gradient across the membrane. The sequence is that of ATP synthase epsilon chain from Shewanella frigidimarina (strain NCIMB 400).